A 497-amino-acid chain; its full sequence is Probable cytosol aminopeptidase (497 aa).

Mn(2+) is bound by residues lysine 267 and aspartate 272. The active site involves lysine 279. Mn(2+)-binding residues include aspartate 290, aspartate 349, and glutamate 351. Residue arginine 353 is part of the active site.

Belongs to the peptidase M17 family. It depends on Mn(2+) as a cofactor.

The protein localises to the cytoplasm. The catalysed reaction is Release of an N-terminal amino acid, Xaa-|-Yaa-, in which Xaa is preferably Leu, but may be other amino acids including Pro although not Arg or Lys, and Yaa may be Pro. Amino acid amides and methyl esters are also readily hydrolyzed, but rates on arylamides are exceedingly low.. The enzyme catalyses Release of an N-terminal amino acid, preferentially leucine, but not glutamic or aspartic acids.. In terms of biological role, presumably involved in the processing and regular turnover of intracellular proteins. Catalyzes the removal of unsubstituted N-terminal amino acids from various peptides. The chain is Probable cytosol aminopeptidase from Pseudomonas entomophila (strain L48).